A 568-amino-acid chain; its full sequence is Small ribosomal subunit protein bS1 (568 aa).

S1 motif domains are found at residues 27 to 93, 111 to 177, 198 to 266, 283 to 353, 370 to 440, and 459 to 530; these read GYVA…LSRE, GERV…VSRR, GQVV…LGMK, GKKI…LGLK, GTEV…LGIK, and NAVV…LSIK.

This sequence belongs to the bacterial ribosomal protein bS1 family.

Binds mRNA; thus facilitating recognition of the initiation point. It is needed to translate mRNA with a short Shine-Dalgarno (SD) purine-rich sequence. In Rhizobium meliloti (strain 1021) (Ensifer meliloti), this protein is Small ribosomal subunit protein bS1 (rpsA).